A 30-amino-acid polypeptide reads, in one-letter code: Photosystem I reaction center subunit XII (30 aa).

The chain crosses the membrane as a helical span at residues 6–26 (VFTILAIALVPAVMAALLGSA).

This sequence belongs to the PsaM family.

The protein localises to the cellular thylakoid membrane. The protein is Photosystem I reaction center subunit XII of Synechococcus sp. (strain JA-3-3Ab) (Cyanobacteria bacterium Yellowstone A-Prime).